Here is a 631-residue protein sequence, read N- to C-terminus: Clathrin interactor 1 (631 aa).

The ENTH domain occupies 24–157 (NVVMNYSEIE…QDDDRLREER (134 aa)). Arg37 contacts a 1,2-diacyl-sn-glycero-3-phospho-(1D-myo-inositol-4,5-bisphosphate). The interaction with VTI1B stretch occupies residues 60–62 (FMY). Arg75 contacts a 1,2-diacyl-sn-glycero-3-phospho-(1D-myo-inositol-4,5-bisphosphate). Interaction with VTI1B regions lie at residues 102-104 (SER) and 150-161 (DDRLREERKKAK). Residues Ser171, Ser174, Ser213, Ser218, Ser235, Ser253, and Ser307 each carry the phosphoserine modification. Residues 227 to 339 (FRRKDREDSP…SSGDLVDLFD (113 aa)) form a disordered region. The span at 230 to 247 (KDREDSPERCSDSDEEKK) shows a compositional bias: basic and acidic residues. Positions 308 to 318 (PDQNASTHTPQ) are enriched in polar residues. Phosphothreonine is present on Thr316. The span at 319-331 (SSAKPSVPSSKSS) shows a compositional bias: low complexity. Residues Ser320 and Ser630 each carry the phosphoserine modification.

Belongs to the epsin family. In terms of assembly, binds clathrin heavy chain and AP-2. Interacts with VTI1B. Interacts with GGA2 (via GAE domain). Interacts with AP1G1 (via GAE domain). Interacts with AP1G2 (via GAE domain).

It is found in the cytoplasm. The protein resides in the perinuclear region. Its subcellular location is the membrane. The protein localises to the cytoplasmic vesicle. It localises to the clathrin-coated vesicle. Its function is as follows. Binds to membranes enriched in phosphatidylinositol 4,5-bisphosphate (PtdIns(4,5)P2). May have a role in transport via clathrin-coated vesicles from the trans-Golgi network to endosomes. Stimulates clathrin assembly. The sequence is that of Clathrin interactor 1 (Clint1) from Mus musculus (Mouse).